Here is a 189-residue protein sequence, read N- to C-terminus: Photosystem I assembly protein Ycf4 (189 aa).

Transmembrane regions (helical) follow at residues 25 to 45 (SVYF…LAGL) and 62 to 82 (LVFI…SLAG).

This sequence belongs to the Ycf4 family.

It is found in the cellular thylakoid membrane. In terms of biological role, seems to be required for the assembly of the photosystem I complex. The sequence is that of Photosystem I assembly protein Ycf4 from Synechococcus sp. (strain JA-3-3Ab) (Cyanobacteria bacterium Yellowstone A-Prime).